Consider the following 724-residue polypeptide: WD repeat-containing protein 91 (724 aa).

Positions 178–207 form a coiled coil; sequence FDSEVQRITSLQEDNEQLRQTVFALQGESR. Positions 249–365 are disordered; sequence SRNFFSTFLP…PDQTDSANQT (117 aa). 2 stretches are compositionally biased toward polar residues: residues 270–279 and 303–315; these read GPQSSPTQSA and SVSSMTAELSTSH. The residue at position 274 (serine 274) is a Phosphoserine. Residues 322-333 show a composition bias toward basic and acidic residues; it reads QDHEKERKELFS. The span at 349-365 shows a compositional bias: polar residues; it reads DTQTEAPPDQTDSANQT. WD repeat units lie at residues 389–428, 431–471, 499–532, 537–576, 579–618, 641–679, and 686–724; these read EHHSSIMHCRVDCSGRRVASLDVDGVVKVWAFNPIMQTKA, MSKS…CLYE, AHSGAVMESEPRGSAPVSGQLLLWDTKTVKQQLQ, PGPVAINCTAFNHNGNLLVTGAADGIIRLFDMQRYESALS, AHDGEVYSVEFSYDENTVFSIGEDGKFVQWNIHRCGVKQS, VQVPRGRLFAFDSEGQHVLTCSSTGGNIYRLNKAEAGLE, and GHKAPVVTVDWCSAMDCGTCLTASMDGKIKLSTLLAQKP.

Belongs to the WD repeat WDR91 family.

It localises to the early endosome membrane. Its subcellular location is the late endosome membrane. Its function is as follows. Functions as a negative regulator of the PI3 kinase/PI3K activity associated with endosomal membranes. By modifying the phosphatidylinositol 3-phosphate/PtdInsP3 content of endosomal membranes may regulate endosome fusion, recycling, sorting and early to late endosome transport. The chain is WD repeat-containing protein 91 (wdr91) from Danio rerio (Zebrafish).